A 748-amino-acid chain; its full sequence is MGRAEAAAMIPGLALLWVAGLGDTAPNLPRLRLSFQELQARHGVRTFRLERTCCYEALLVDEERGRLFVGAENHVASLSLDNISKRAKKLAWPAPVEWREECNWAGKDIGTECMNFVKLLHTYNHTHLLACGTGAFHPTCALWRWATAGGTHASTGPEKLEDGKGKTPYDPRHRAASVLVGEELYSGVTADLMGRDFTIFRSLGQNPSLRTEPHDSRWLNEPKFVKVFWIPESENPDDDKIYFFFRESAVEAAPAMGRMSVSRVGQICRNDLGGQRSLVNKWTTFLKARLVCSVPGVEGDTHFDQLQDVFLLSSRDRQTPLLYAVFSTSSGVFQGSAVCVYSMNDVRRAFLGPFAHKEGPTHQWVSYQGRVPYPRPGMCPSKTFGTFSSTKDFPDDVIQFARNHPLMYNPVLPMGGRPLFLQVGAGYTFTQIAADRVAAADGHYDVLFIGTDVGTVLKVISVPKGSRPNSEGLLLEELQVFEDSAAITSMQISSKRQQLYIASRSAVAQIALHRCTALGRACAECCLARDPYCAWDGSACTRFQPTAKRRFRRQDIRNGDPSTLCSGDSSHSVLLEKKVLGVESGSAFLECEPRSLQAHVQWTFQGAGEAAHTQVLAEERVERTARGLLLRGLRRQDSGVYLCVAVEQGFSQPLRRLVLHVLSAAQAERLARAEEAAAPAPPGPKLWYRDFLQLVEPGGGGGANSLRMCRPQPGHHSVAADSRRKGRNRRMHVSELRAERGPRSAAHW.

Positions 1 to 25 (MGRAEAAAMIPGLALLWVAGLGDTA) are cleaved as a signal peptide. The Sema domain maps to 30 to 512 (RLRLSFQELQ…SRSAVAQIAL (483 aa)). N-linked (GlcNAc...) asparagine glycosylation is present at Asn-82. A disulfide bridge links Cys-102 with Cys-113. N-linked (GlcNAc...) asparagine glycosylation is present at Asn-124. Disulfide bonds link Cys-131–Cys-140, Cys-268–Cys-379, Cys-292–Cys-339, Cys-515–Cys-533, and Cys-643–Cys-709. One can recognise an Ig-like C2-type domain in the interval 561 to 659 (PSTLCSGDSS…FSQPLRRLVL (99 aa)). The interval 708–748 (MCRPQPGHHSVAADSRRKGRNRRMHVSELRAERGPRSAAHW) is disordered. Residues 732-742 (HVSELRAERGP) are compositionally biased toward basic and acidic residues.

Belongs to the semaphorin family.

Its subcellular location is the secreted. In terms of biological role, inhibits axonal extension by providing local signals to specify territories inaccessible for growing axons. This chain is Semaphorin-3B (Sema3b), found in Mus musculus (Mouse).